We begin with the raw amino-acid sequence, 433 residues long: Serine/threonine-protein kinase DCLK1 (433 aa).

The interval 1–74 (MLELIEVNGT…GEEESDEGFQ (74 aa)) is disordered. Phosphoserine occurs at positions 23, 25, 27, 30, 40, 45, 46, 48, 57, and 69. Over residues 40–57 (SQHGGSSTSLSSTKVCSS) the composition is skewed to low complexity. Acidic residues predominate over residues 59 to 71 (DENDGPGEEESDE). One can recognise a Protein kinase domain in the interval 83 to 340 (YKVGRTIGDG…AVQVLEHPWV (258 aa)). Residues 89 to 97 (IGDGNFAVV) and K112 each bind ATP. Catalysis depends on D204, which acts as the Proton acceptor. Y213 bears the Phosphotyrosine mark. Residues 388-400 (QVFRRRRNQDVRG) show a composition bias toward basic and acidic residues. The segment at 388 to 433 (QVFRRRRNQDVRGRYKAQPAPPELNSESEDYSPSSSETVRSPNSPF) is disordered. Residues S419, S428, and S431 each carry the phosphoserine modification.

It belongs to the protein kinase superfamily. CAMK Ser/Thr protein kinase family. CaMK subfamily.

It carries out the reaction L-seryl-[protein] + ATP = O-phospho-L-seryl-[protein] + ADP + H(+). It catalyses the reaction L-threonyl-[protein] + ATP = O-phospho-L-threonyl-[protein] + ADP + H(+). Probable kinase that may be involved in a calcium-signaling pathway controlling neuronal migration in the developing brain. May also participate in functions of the mature nervous system. This is Serine/threonine-protein kinase DCLK1 (Dclk1) from Rattus norvegicus (Rat).